The primary structure comprises 203 residues: Outer-membrane lipoprotein LolB (203 aa).

Residues 1–18 form the signal peptide; it reads MTLRSFLIFFLSSLILAG. Cys19 carries the N-palmitoyl cysteine lipid modification. Cys19 carries S-diacylglycerol cysteine lipidation.

Belongs to the LolB family. As to quaternary structure, monomer.

It is found in the cell outer membrane. In terms of biological role, plays a critical role in the incorporation of lipoproteins in the outer membrane after they are released by the LolA protein. This chain is Outer-membrane lipoprotein LolB, found in Vibrio parahaemolyticus serotype O3:K6 (strain RIMD 2210633).